Here is a 668-residue protein sequence, read N- to C-terminus: Transketolase (668 aa).

Substrate is bound at residue H28. Residues H68 and 116–118 contribute to the thiamine diphosphate site; that span reads GPL. D157 lines the Mg(2+) pocket. Thiamine diphosphate is bound by residues G158 and N187. Mg(2+) is bound by residues N187 and I189. Substrate contacts are provided by H263, R358, and S385. H263 contacts thiamine diphosphate. E412 serves as the catalytic Proton donor. F438 is a thiamine diphosphate binding site. Residues H462, D470, H474, and R521 each coordinate substrate.

This sequence belongs to the transketolase family. Homodimer. Mg(2+) serves as cofactor. The cofactor is thiamine diphosphate.

It catalyses the reaction D-sedoheptulose 7-phosphate + D-glyceraldehyde 3-phosphate = aldehydo-D-ribose 5-phosphate + D-xylulose 5-phosphate. Catalyzes the transfer of a two-carbon ketol group from a ketose donor to an aldose acceptor, likely via a covalent intermediate with the cofactor thiamine pyrophosphate. Can use L-erythrulose as donor and D-ribose-5-phosphate as acceptor substrates, forming glycolaldehyde and D-sedoheptulose-7-phosphate. For synthetic purposes, is able to use hydroxypyruvate (HPA) as donor substrate, making the reaction irreversible due to the release of carbon dioxide, and various aldehydes as acceptor substrates, which leads to the corresponding ketoses. Thus, using hydroxypyruvate as donor and three different aldehydes as acceptors, i.e. glycolaldehyde, D-glyceraldehyde and butyraldehyde, the enzyme stereoselectively forms the corresponding products L-erythrulose, D-xylulose and (3S)-1,3-dihydroxyhexan-2-one, respectively. The chain is Transketolase from Geobacillus stearothermophilus (Bacillus stearothermophilus).